Here is a 586-residue protein sequence, read N- to C-terminus: Beta-fructofuranosidase, insoluble isoenzyme 3 (586 aa).

A signal peptide spans 1–26 (MATARARAALVFVALLQMAAVVVVRA). D61 is a catalytic residue. N-linked (GlcNAc...) asparagine glycans are attached at residues N154, N179, N341, N390, and N479.

The protein belongs to the glycosyl hydrolase 32 family.

It localises to the secreted. The protein resides in the extracellular space. It is found in the apoplast. The protein localises to the cell wall. It carries out the reaction Hydrolysis of terminal non-reducing beta-D-fructofuranoside residues in beta-D-fructofuranosides.. This is Beta-fructofuranosidase, insoluble isoenzyme 3 (CIN3) from Oryza sativa subsp. indica (Rice).